We begin with the raw amino-acid sequence, 368 residues long: Methylthioribose-1-phosphate isomerase (368 aa).

Substrate is bound by residues 54-56, Arg-91, and Gln-204; that span reads RGA. Residue Asp-245 is the Proton donor of the active site. A substrate-binding site is contributed by 255–256; the sequence is NK.

Belongs to the eIF-2B alpha/beta/delta subunits family. MtnA subfamily.

It catalyses the reaction 5-(methylsulfanyl)-alpha-D-ribose 1-phosphate = 5-(methylsulfanyl)-D-ribulose 1-phosphate. It functions in the pathway amino-acid biosynthesis; L-methionine biosynthesis via salvage pathway; L-methionine from S-methyl-5-thio-alpha-D-ribose 1-phosphate: step 1/6. Catalyzes the interconversion of methylthioribose-1-phosphate (MTR-1-P) into methylthioribulose-1-phosphate (MTRu-1-P). The sequence is that of Methylthioribose-1-phosphate isomerase from Gluconobacter oxydans (strain 621H) (Gluconobacter suboxydans).